The chain runs to 394 residues: Elongation factor Tu (394 aa).

A tr-type G domain is found at 10–204 (KEHANIGTIG…AVDDYIPTPE (195 aa)). A G1 region spans residues 19-26 (GHVDHGKT). 19–26 (GHVDHGKT) provides a ligand contact to GTP. Mg(2+) is bound at residue threonine 26. The tract at residues 60 to 64 (GITIN) is G2. Positions 81 to 84 (DCPG) are G3. GTP contacts are provided by residues 81 to 85 (DCPGH) and 136 to 139 (NKVD). The segment at 136–139 (NKVD) is G4. Positions 174–176 (SAL) are G5.

The protein belongs to the TRAFAC class translation factor GTPase superfamily. Classic translation factor GTPase family. EF-Tu/EF-1A subfamily. In terms of assembly, monomer.

The protein localises to the cytoplasm. It catalyses the reaction GTP + H2O = GDP + phosphate + H(+). Its function is as follows. GTP hydrolase that promotes the GTP-dependent binding of aminoacyl-tRNA to the A-site of ribosomes during protein biosynthesis. This chain is Elongation factor Tu, found in Staphylococcus haemolyticus (strain JCSC1435).